Consider the following 302-residue polypeptide: MSEREFLRFGDELDVKNCNTSRSFNGLLMAIGGIIGGTAGMLIALIIAGFMNFMSYWFSDKIVLSMYGAREIPYEEAPWLHQIVEELARRANMPKPKIYLVPMEQPNAFATGRGPGHAAVAVTRGILEILDQEELKGVLAHELAHIKNRDVLVATIAATIAGAIGFLANMAQWALFFGGLNRNEEEEGGGFAEMIGAILMIIIVPIIATIVQLAISRSREYFADETGAKICGCPVALARALKKIEEYVMQVPANVNPGTAHLFIENPLKGGGIMELLSTHPSTEKRIQRLCELARKMGQECI.

Residues 27-47 (LLMAIGGIIGGTAGMLIALII) traverse the membrane as a helical segment. H141 is a binding site for Zn(2+). E142 is an active-site residue. H145 is a binding site for Zn(2+). 2 helical membrane passes run 151-171 (VLVA…ANMA) and 195-215 (IGAI…QLAI). E220 provides a ligand contact to Zn(2+).

It belongs to the peptidase M48B family. The cofactor is Zn(2+).

The protein resides in the cell inner membrane. The protein is Protease HtpX homolog of Aquifex aeolicus (strain VF5).